The following is a 315-amino-acid chain: Methionyl-tRNA formyltransferase (315 aa).

Serine 113–proline 116 is a binding site for (6S)-5,6,7,8-tetrahydrofolate.

Belongs to the Fmt family.

It carries out the reaction L-methionyl-tRNA(fMet) + (6R)-10-formyltetrahydrofolate = N-formyl-L-methionyl-tRNA(fMet) + (6S)-5,6,7,8-tetrahydrofolate + H(+). Attaches a formyl group to the free amino group of methionyl-tRNA(fMet). The formyl group appears to play a dual role in the initiator identity of N-formylmethionyl-tRNA by promoting its recognition by IF2 and preventing the misappropriation of this tRNA by the elongation apparatus. The protein is Methionyl-tRNA formyltransferase of Pseudoalteromonas atlantica (strain T6c / ATCC BAA-1087).